Reading from the N-terminus, the 146-residue chain is Putative pre-16S rRNA nuclease (146 aa).

Belongs to the YqgF nuclease family.

Its subcellular location is the cytoplasm. In terms of biological role, could be a nuclease involved in processing of the 5'-end of pre-16S rRNA. The protein is Putative pre-16S rRNA nuclease of Methylobacillus flagellatus (strain ATCC 51484 / DSM 6875 / VKM B-1610 / KT).